Consider the following 1082-residue polypeptide: M cell-type agglutination protein mam3 (1082 aa).

A signal peptide spans 1-18 (MSIALAFFILVLLGFSWA). Residues Asn-28, Asn-56, and Asn-82 are each glycosylated (N-linked (GlcNAc...) asparagine). Residues 353–374 (TSSSSTDQLTSASPISSSVISP) are disordered. 8 N-linked (GlcNAc...) asparagine glycosylation sites follow: Asn-451, Asn-475, Asn-495, Asn-520, Asn-548, Asn-588, Asn-613, and Asn-638. Repeat copies occupy residues 646-681 (QTTTEYTTSGSVGFTTTLATQSGSVPGTVLVDVPTP), 682-717 (SWITETVTSGSVGFTTTIATPIGTTAGTVLVDIPTP), 718-753 (SWVTETVTSGSIGFTTTIATPIGSTAGTVLVDVPTP), 754-789 (SWVTETVTSGSVGFTTTIATPIGSTAGTVLVDIPTP), 790-825 (SWVTETVTSGSVGFTTTIATPVGTTAGTVLVDIPTP), 826-861 (SWVTETVTSGSVGFTTTIATPVGTTAGTVVVDVPTP), 862-897 (SWVTETVTSGSVGFTTTIATPIGSTAGTVLVDIPTP), 898-933 (SWVTETVTSGSVGFTTTIATPVGTTAGTVLVDIPTP), 934-969 (SWVTETVTSGSVGFTTTIATPIGTTAGTVLVDIPTP), 970-1005 (SWVTETVTSGSVGFTTTIATPVGTTAGTVLVDIPTP), and 1006-1041 (SWVTETVTSGSVGFTTTIATPIGTTAGTVLVDIPQQ). The tract at residues 720-1043 (VTETVTSGSI…VLVDIPQQHA (324 aa)) is 11 X 36 AA approximate tandem repeats.

The protein belongs to the mam3/map4 family.

The protein localises to the cell surface. M cell-type specific protein involved in agglutination during conjugation. The sequence is that of M cell-type agglutination protein mam3 from Schizosaccharomyces pombe (strain 972 / ATCC 24843) (Fission yeast).